The primary structure comprises 323 residues: Phosphopantothenate--cysteine ligase 2 (323 aa).

This sequence belongs to the PPC synthetase family. As to quaternary structure, homodimer.

It catalyses the reaction (R)-4'-phosphopantothenate + L-cysteine + CTP = N-[(R)-4-phosphopantothenoyl]-L-cysteine + CMP + diphosphate + H(+). The protein operates within cofactor biosynthesis; coenzyme A biosynthesis; CoA from (R)-pantothenate: step 2/5. Its function is as follows. Catalyzes the first step in the biosynthesis of coenzyme A from vitamin B5, where cysteine is conjugated to 4'-phosphopantothenate to form 4-phosphopantothenoylcysteine. This chain is Phosphopantothenate--cysteine ligase 2, found in Oryza sativa subsp. japonica (Rice).